Here is a 678-residue protein sequence, read N- to C-terminus: DNA ligase (678 aa).

Residues 36–40 (DAEYD), 85–86 (SL), and E117 each bind NAD(+). K119 serves as the catalytic N6-AMP-lysine intermediate. Positions 140, 177, 294, and 318 each coordinate NAD(+). Positions 412, 415, 430, and 436 each coordinate Zn(2+). Residues 595–678 (ADEQPLNGQT…NLLREHGIEV (84 aa)) enclose the BRCT domain.

The protein belongs to the NAD-dependent DNA ligase family. LigA subfamily. Mg(2+) serves as cofactor. The cofactor is Mn(2+).

The enzyme catalyses NAD(+) + (deoxyribonucleotide)n-3'-hydroxyl + 5'-phospho-(deoxyribonucleotide)m = (deoxyribonucleotide)n+m + AMP + beta-nicotinamide D-nucleotide.. In terms of biological role, DNA ligase that catalyzes the formation of phosphodiester linkages between 5'-phosphoryl and 3'-hydroxyl groups in double-stranded DNA using NAD as a coenzyme and as the energy source for the reaction. It is essential for DNA replication and repair of damaged DNA. In Marinobacter nauticus (strain ATCC 700491 / DSM 11845 / VT8) (Marinobacter aquaeolei), this protein is DNA ligase.